A 341-amino-acid chain; its full sequence is Inositol 2-dehydrogenase (341 aa).

The protein belongs to the Gfo/Idh/MocA family. Homotetramer.

The catalysed reaction is myo-inositol + NAD(+) = scyllo-inosose + NADH + H(+). Functionally, involved in the oxidation of myo-inositol (MI) to 2-keto-myo-inositol (2KMI or 2-inosose). In Acidothermus cellulolyticus (strain ATCC 43068 / DSM 8971 / 11B), this protein is Inositol 2-dehydrogenase.